Here is a 539-residue protein sequence, read N- to C-terminus: uncharacterized protein (539 aa).

A disordered region spans residues 316–433 (AEHHHQKGKK…ATVERSSPPE (118 aa)). Basic residues predominate over residues 318 to 352 (HHHQKGKKVPATHRRSSTPHARKTAGTRARTRARK). Positions 362–384 (KISKKDSGESKQKDETAGMERVF) are enriched in basic and acidic residues. Polar residues predominate over residues 390–402 (NVRTCSSRASRTG).

This is an uncharacterized protein from Treponema pallidum (strain Nichols).